A 90-amino-acid polypeptide reads, in one-letter code: Acylphosphatase (90 aa).

In terms of domain architecture, Acylphosphatase-like spans 4-90 (RWRFLIEGSV…TGNDWFDVRT (87 aa)). Catalysis depends on residues Arg-19 and Asn-37.

Belongs to the acylphosphatase family.

The catalysed reaction is an acyl phosphate + H2O = a carboxylate + phosphate + H(+). The sequence is that of Acylphosphatase (acyP) from Synechococcus sp. (strain CC9311).